Here is a 613-residue protein sequence, read N- to C-terminus: MKSLNDLPAPKSTTTTYYDHSNDAWFKNRVTESETVKSSSIKFKVVPAYLNRQGLRPKNPEDFGDGGAFPEIHLPQYPLLMGKNKSNKPGAKTLPVTVDAQGNVVFDAIVRQNENSRKIVYSQHKDIIPKFLKNEGDLGTVVDEEEELQKEIQETAEETKAAIEKIVNVRLSAAQPSNIARQSGDSQYIKYKPSQQSSAFNSGAKERIIRMVEMPVDPLDPPKFKHKRVPRASGSPPVPVMHSPPRPVTVKDQQDWKIPPCISNWKNPKGYTIPLDKRLAADGRGLQDVQINDNFAKLSEALYVAEQKAREAVSMRSKVQKEMVMKDKERKEQELRALAQKARSERTGAAMSMPVSSDRGRSESVDPRGDYDNYDQDRGREREREEPQETREEREKRIQREKIREERRRERERERRLDAKDAAMGKKSKITRDRDRDISEKVALGMASTGGKGGGEVMYDQRLFNQDKGMDSGFAADDQYNLYDKGLFTAQPTLSTLYKPKKDNDEEMYGNADEQLDKIKNTERFKPDKAFTGASERVGSKRDRPVEFEKEEEQDPFGLEKWVSDLKKGKKPLDKIGSGGTMRASGGGGSSSRDDDHGGSGRTKINFERSDRR.

A coiled-coil region spans residues 135 to 170; sequence EGDLGTVVDEEEELQKEIQETAEETKAAIEKIVNVR. Residues 186 to 350 are SNW; sequence SQYIKYKPSQ…KARSERTGAA (165 aa). 3 disordered regions span residues 219–252, 315–437, and 513–613; these read LDPP…TVKD, MRSK…RDRD, and DEQL…SDRR. A phosphoserine mark is found at Ser235 and Ser243. Positions 236–247 are enriched in pro residues; that stretch reads PPVPVMHSPPRP. 5 stretches are compositionally biased toward basic and acidic residues: residues 315–335, 358–437, 515–529, 538–548, and 562–574; these read MRSK…EQEL, DRGR…RDRD, QLDK…KPDK, VGSKRDRPVEF, and WVSD…KPLD. Coiled-coil stretches lie at residues 318–349 and 391–421; these read KVQK…RTGA and REER…DAKD. A compositionally biased stretch (gly residues) spans 577–590; that stretch reads GSGGTMRASGGGGS. The segment covering 592–613 has biased composition (basic and acidic residues); sequence SRDDDHGGSGRTKINFERSDRR.

Belongs to the SNW family. Component of the spliceosome. Interacts with SR45. Expressed in roots, stems, seedlings, siliques, cotyledons, leaves, inflorescences, seeds and shoot apical meristem.

It localises to the nucleus speckle. Functionally, splicing factor involved in post-transcriptional regulation of circadian clock and flowering time genes. Associates with the pre-mRNA of PRR7, PRR9, ELF3 and GI, and is necessary for the regulation of their alternative splicing and mRNA maturation. Probably involved in splice site recognition. In Arabidopsis thaliana (Mouse-ear cress), this protein is SNW/SKI-interacting protein (SKIP).